Consider the following 140-residue polypeptide: Small ribosomal subunit protein bS6 (140 aa).

The disordered stretch occupies residues 96–140 (VTGQSEMLKAEENRSERRERRDRPEHEGADSADSDDSDNSDNADE). Residues 103-124 (LKAEENRSERRERRDRPEHEGA) show a composition bias toward basic and acidic residues. Over residues 125 to 140 (DSADSDDSDNSDNADE) the composition is skewed to acidic residues.

The protein belongs to the bacterial ribosomal protein bS6 family.

Its function is as follows. Binds together with bS18 to 16S ribosomal RNA. This chain is Small ribosomal subunit protein bS6, found in Pseudomonas fluorescens (strain SBW25).